The primary structure comprises 110 residues: Ferredoxin (110 aa).

2 4Fe-4S ferredoxin-type domains span residues threonine 2–glutamate 30 and phenylalanine 31–proline 60. Residues cysteine 9 and cysteine 17 each contribute to the [3Fe-4S] cluster site. Positions 21, 40, 43, and 46 each coordinate [4Fe-4S] cluster. Cysteine 50 contributes to the [3Fe-4S] cluster binding site.

[4Fe-4S] cluster is required as a cofactor. Requires [3Fe-4S] cluster as cofactor.

In terms of biological role, ferredoxins are iron-sulfur proteins that transfer electrons in a wide variety of metabolic reactions. The polypeptide is Ferredoxin (fdxA) (Rickettsia typhi (strain ATCC VR-144 / Wilmington)).